The chain runs to 286 residues: CDP-diacylglycerol--serine O-phosphatidyltransferase (286 aa).

The next 5 membrane-spanning stretches (helical) occupy residues 15–35, 95–115, 135–155, 167–187, and 207–227; these read ILPSAMTVLSICAGLTAIKFA, MLSKWPVGWVVVLLYAVCVVL, EFFVGMPAPAGAVSMIGLLAL, VWFLSFWVTGTSILLVSGIPM, and LAICAAAAVLAPYLLIWVIII.

Belongs to the CDP-alcohol phosphatidyltransferase class-I family.

Its subcellular location is the cell membrane. The catalysed reaction is a CDP-1,2-diacyl-sn-glycerol + L-serine = a 1,2-diacyl-sn-glycero-3-phospho-L-serine + CMP + H(+). The sequence is that of CDP-diacylglycerol--serine O-phosphatidyltransferase (pssA) from Mycobacterium bovis (strain ATCC BAA-935 / AF2122/97).